The chain runs to 387 residues: 17-beta-hydroxysteroid dehydrogenase type 2 (387 aa).

A helical; Signal-anchor for type II membrane protein transmembrane segment spans residues 4-24; sequence FFSDTAWICLAVPTVLCGTVF. 82–111 contacts NAD(+); it reads QKAVLVTGGDCGLGHALCKYLDELGFTVFA. S219 contacts substrate. Y232 is an active-site residue.

This sequence belongs to the short-chain dehydrogenases/reductases (SDR) family. In terms of assembly, homodimer. Expressed in placenta.

It is found in the endoplasmic reticulum membrane. The catalysed reaction is 17beta-estradiol + NAD(+) = estrone + NADH + H(+). It catalyses the reaction testosterone + NAD(+) = androst-4-ene-3,17-dione + NADH + H(+). It carries out the reaction 17beta-hydroxy-5alpha-androstan-3-one + NAD(+) = 5alpha-androstan-3,17-dione + NADH + H(+). The enzyme catalyses (20S)-hydroxypregn-4-en-3-one + NAD(+) = progesterone + NADH + H(+). Functionally, catalyzes the NAD-dependent oxidation of the highly active 17beta-hydroxysteroids, such as estradiol (E2), testosterone (T), and dihydrotestosterone (DHT), to their less active forms and thus regulates the biological potency of these steroids. Oxidizes estradiol to estrone, testosterone to androstenedione, and dihydrotestosterone to 5alpha-androstan-3,17-dione. Also has 20-alpha-HSD activity. This chain is 17-beta-hydroxysteroid dehydrogenase type 2, found in Homo sapiens (Human).